Here is an 87-residue protein sequence, read N- to C-terminus: uncharacterized protein (87 aa).

This sequence belongs to the SF3B5 family.

This is an uncharacterized protein from Arabidopsis thaliana (Mouse-ear cress).